A 515-amino-acid chain; its full sequence is Sodium/hydrogen exchanger 9B1 (515 aa).

Residues 1–10 (MHTTESKNEH) are compositionally biased toward basic and acidic residues. The segment at 1–32 (MHTTESKNEHLEDENFQTSTTPQSLIDPNNTA) is disordered. A compositionally biased stretch (polar residues) spans 16-32 (FQTSTTPQSLIDPNNTA). The next 13 helical transmembrane spans lie at 66-86 (VIIT…SILG), 95-115 (LFGL…LQLI), 116-136 (RIPL…GFTI), 152-172 (WSSI…GLGL), 187-207 (LAVG…HFIM), 215-235 (FLLG…YMMV), 260-280 (ILAI…GGIL), 284-304 (IASI…GFFV), 337-357 (IGLH…AGTK), 368-388 (IITT…GAEV), 407-427 (LALC…GFSF), 431-451 (IFIA…GPLA), and 472-492 (VAFL…GILG).

It belongs to the monovalent cation:proton antiporter 1 (CPA1) transporter (TC 2.A.36) family. Expressed only in the testis.

The protein localises to the cell projection. The protein resides in the cilium. It is found in the flagellum membrane. Functionally, sperm-specific Na(+)/H(+) exchanger involved in intracellular pH regulation of spermatozoa. Involved in sperm motility and fertility. This chain is Sodium/hydrogen exchanger 9B1, found in Homo sapiens (Human).